A 292-amino-acid polypeptide reads, in one-letter code: 4-hydroxy-tetrahydrodipicolinate synthase (292 aa).

T45 contacts pyruvate. Y133 acts as the Proton donor/acceptor in catalysis. K161 (schiff-base intermediate with substrate) is an active-site residue. A pyruvate-binding site is contributed by I203.

The protein belongs to the DapA family. Homotetramer; dimer of dimers.

The protein resides in the cytoplasm. It carries out the reaction L-aspartate 4-semialdehyde + pyruvate = (2S,4S)-4-hydroxy-2,3,4,5-tetrahydrodipicolinate + H2O + H(+). It participates in amino-acid biosynthesis; L-lysine biosynthesis via DAP pathway; (S)-tetrahydrodipicolinate from L-aspartate: step 3/4. Functionally, catalyzes the condensation of (S)-aspartate-beta-semialdehyde [(S)-ASA] and pyruvate to 4-hydroxy-tetrahydrodipicolinate (HTPA). This Salmonella typhi protein is 4-hydroxy-tetrahydrodipicolinate synthase.